Consider the following 128-residue polypeptide: Fluoride-specific ion channel FluC (128 aa).

Helical transmembrane passes span 4 to 24 (VFLLIIGGAIGSALRFGVSTW), 35 to 55 (FGILSVNVIGSFLIGFCWSIA), 67 to 87 (FLFTGLFGGFTTFSSFALDTM), and 99 to 119 (LLNVLASNILGLIAVFLGIIL). Gly-74 and Thr-77 together coordinate Na(+).

It belongs to the fluoride channel Fluc/FEX (TC 1.A.43) family.

Its subcellular location is the cell inner membrane. The enzyme catalyses fluoride(in) = fluoride(out). With respect to regulation, na(+) is not transported, but it plays an essential structural role and its presence is essential for fluoride channel function. In terms of biological role, fluoride-specific ion channel. Important for reducing fluoride concentration in the cell, thus reducing its toxicity. In Parabacteroides distasonis (strain ATCC 8503 / DSM 20701 / CIP 104284 / JCM 5825 / NCTC 11152), this protein is Fluoride-specific ion channel FluC.